The following is a 271-amino-acid chain: Shikimate dehydrogenase (NADP(+)) (271 aa).

Residues 14-16 (SKS) and T61 contribute to the shikimate site. The active-site Proton acceptor is the K65. 2 residues coordinate shikimate: N86 and D102. NADP(+) is bound by residues 126–130 (GAGGA), 149–154 (NRTFSR), and M213. Y215 is a shikimate binding site. G238 is an NADP(+) binding site.

This sequence belongs to the shikimate dehydrogenase family. In terms of assembly, homodimer.

The enzyme catalyses shikimate + NADP(+) = 3-dehydroshikimate + NADPH + H(+). The protein operates within metabolic intermediate biosynthesis; chorismate biosynthesis; chorismate from D-erythrose 4-phosphate and phosphoenolpyruvate: step 4/7. Functionally, involved in the biosynthesis of the chorismate, which leads to the biosynthesis of aromatic amino acids. Catalyzes the reversible NADPH linked reduction of 3-dehydroshikimate (DHSA) to yield shikimate (SA). The protein is Shikimate dehydrogenase (NADP(+)) of Histophilus somni (strain 2336) (Haemophilus somnus).